A 107-amino-acid chain; its full sequence is Ribonuclease P protein subunit rpr2 (107 aa).

Cys59, Cys62, Cys93, and Cys96 together coordinate Zn(2+).

The protein belongs to the eukaryotic/archaeal RNase P protein component 4 family. Requires Zn(2+) as cofactor.

The protein resides in the cytoplasm. Its subcellular location is the nucleus. The catalysed reaction is Endonucleolytic cleavage of RNA, removing 5'-extranucleotides from tRNA precursor.. In terms of biological role, component of ribonuclease P, a protein complex that generates mature tRNA molecules by cleaving their 5'-ends. The protein is Ribonuclease P protein subunit rpr2 (rpr2) of Schizosaccharomyces pombe (strain 972 / ATCC 24843) (Fission yeast).